The primary structure comprises 387 residues: Sulfate adenylyltransferase (387 aa).

The protein belongs to the sulfate adenylyltransferase family.

The enzyme catalyses sulfate + ATP + H(+) = adenosine 5'-phosphosulfate + diphosphate. Its pathway is sulfur metabolism; hydrogen sulfide biosynthesis; sulfite from sulfate: step 1/3. This chain is Sulfate adenylyltransferase (sat), found in Deinococcus radiodurans (strain ATCC 13939 / DSM 20539 / JCM 16871 / CCUG 27074 / LMG 4051 / NBRC 15346 / NCIMB 9279 / VKM B-1422 / R1).